The sequence spans 329 residues: L-lactate dehydrogenase (329 aa).

Residues valine 18, glutamate 39, lysine 46, tyrosine 71, and 85 to 86 (GA) contribute to the NAD(+) site. Residues glutamine 88 and arginine 94 each coordinate substrate. Residues serine 107, 124–126 (AAN), and serine 149 contribute to the NAD(+) site. Position 126–129 (126–129 (NPVD)) interacts with substrate. A substrate-binding site is contributed by 154-157 (DSAR). Arginine 159 and histidine 174 together coordinate beta-D-fructose 1,6-bisphosphate. Histidine 181 serves as the catalytic Proton acceptor. A Phosphotyrosine modification is found at tyrosine 226. A substrate-binding site is contributed by threonine 235.

The protein belongs to the LDH/MDH superfamily. LDH family. In terms of assembly, homotetramer.

The protein resides in the cytoplasm. It catalyses the reaction (S)-lactate + NAD(+) = pyruvate + NADH + H(+). It functions in the pathway fermentation; pyruvate fermentation to lactate; (S)-lactate from pyruvate: step 1/1. Allosterically activated by fructose 1,6-bisphosphate (FBP). Its function is as follows. Catalyzes the conversion of lactate to pyruvate. The chain is L-lactate dehydrogenase from Streptococcus equinus (Streptococcus bovis).